Reading from the N-terminus, the 208-residue chain is Cytochrome c biogenesis ATP-binding export protein CcmA (208 aa).

Positions 2–206 constitute an ABC transporter domain; the sequence is LEAKELTCAR…IRLTAEGRDE (205 aa). ATP is bound at residue 34 to 41; the sequence is GPNGAGKT.

It belongs to the ABC transporter superfamily. CcmA exporter (TC 3.A.1.107) family. As to quaternary structure, the complex is composed of two ATP-binding proteins (CcmA) and two transmembrane proteins (CcmB).

Its subcellular location is the cell inner membrane. It catalyses the reaction heme b(in) + ATP + H2O = heme b(out) + ADP + phosphate + H(+). In terms of biological role, part of the ABC transporter complex CcmAB involved in the biogenesis of c-type cytochromes; once thought to export heme, this seems not to be the case, but its exact role is uncertain. Responsible for energy coupling to the transport system. This chain is Cytochrome c biogenesis ATP-binding export protein CcmA, found in Tatumella citrea (Pantoea citrea).